The chain runs to 622 residues: Low affinity potassium transport system protein Kup (622 aa).

12 helical membrane-spanning segments follow: residues 9–29 (LPAITLAAIGVVYGDIGTSPL), 49–69 (VFGFLSLIFWLLIFVVSIKYL), 103–123 (VIMGLIGGSFFYGEVVITPAI), 137–157 (PQLDTWIVPLSIIVLTLLFMI), 165–185 (VGKLFAPIMLTWFLILAGLGL), 213–233 (VSFIALGAVVLSITGVEALYA), 247–267 (WFTVVLPSLTLNYFGQGALLL), 276–296 (PFFLLAPDWALIPLLIIAALA), 337–357 (IYIPFVNWMLYVAVVIVIVSF), 363–383 (LAAAYGIAVTGTMVLTSILST), 396–416 (FVALILIAFLCVDIPLFTANL), and 419–439 (LLSGGWLPLSLGTVMFIVMTT).

It belongs to the HAK/KUP transporter (TC 2.A.72) family.

The protein resides in the cell inner membrane. It carries out the reaction K(+)(in) + H(+)(in) = K(+)(out) + H(+)(out). Responsible for the low-affinity transport of potassium into the cell. Likely operates as a K(+):H(+) symporter. The protein is Low affinity potassium transport system protein Kup of Shigella sonnei (strain Ss046).